Here is a 190-residue protein sequence, read N- to C-terminus: Somatotropin (190 aa).

H19 serves as a coordination point for Zn(2+). A disulfide bond links C52 and C163. S105 carries the post-translational modification Phosphoserine. Residue E172 coordinates Zn(2+). C180 and C188 are joined by a disulfide.

The protein belongs to the somatotropin/prolactin family.

It localises to the secreted. In terms of biological role, plays an important role in growth control. Its major role in stimulating body growth is to stimulate the liver and other tissues to secrete IGF1. It stimulates both the differentiation and proliferation of myoblasts. It also stimulates amino acid uptake and protein synthesis in muscle and other tissues. The polypeptide is Somatotropin (GH1) (Balaenoptera borealis (Sei whale)).